Consider the following 106-residue polypeptide: Small ribosomal subunit protein uS10 (106 aa).

The protein belongs to the universal ribosomal protein uS10 family. As to quaternary structure, part of the 30S ribosomal subunit.

Involved in the binding of tRNA to the ribosomes. In Caldicellulosiruptor saccharolyticus (strain ATCC 43494 / DSM 8903 / Tp8T 6331), this protein is Small ribosomal subunit protein uS10.